A 149-amino-acid chain; its full sequence is Evolved beta-galactosidase subunit beta (149 aa).

Heterooctamer of 4 alpha and 4 beta subunits.

Required for full activity of the EbgA enzyme. Exact function not known. In Escherichia coli O6:H1 (strain CFT073 / ATCC 700928 / UPEC), this protein is Evolved beta-galactosidase subunit beta (ebgC).